The sequence spans 392 residues: 2'-deamino-2'-hydroxyneamine transaminase (392 aa).

K249 is subject to N6-(pyridoxal phosphate)lysine.

The protein belongs to the class-III pyridoxal-phosphate-dependent aminotransferase family. Pyridoxal 5'-phosphate serves as cofactor.

The enzyme catalyses neamine + 2-oxoglutarate = 6'-oxoparomamine + L-glutamate. It carries out the reaction 2'-deamino-2'-hydroxyneamine + 2-oxoglutarate = 2'-deamino-2'-hydroxy-6'-dehydroparomamine + L-glutamate. It participates in antibiotic biosynthesis; kanamycin biosynthesis. Its function is as follows. Aminotransferase that has 6'-oxoglucosaminyl:L-glutamate aminotransferase activity by catalyzing pyridoxal-5'-phosphate-mediated transamination leading to the conversion of paromamine to neamine in the biosynthetic pathway of kanamycin B. The protein is 2'-deamino-2'-hydroxyneamine transaminase (kacL) of Streptomyces kanamyceticus.